Consider the following 396-residue polypeptide: Zinc metalloproteinase nas-19 (396 aa).

The N-terminal stretch at 1–20 (MVRLIHLIGAIILLFSYAYC) is a signal peptide. A Peptidase M12A domain is found at 38 to 231 (RVKRQFERLG…YKINQYYGCW (194 aa)). Asn-79 carries N-linked (GlcNAc...) asparagine glycosylation. Disulfide bonds link Cys-82–Cys-230, Cys-105–Cys-130, Cys-232–Cys-252, and Cys-254–Cys-263. Zn(2+) is bound at residue His-138. The active site involves Glu-139. Zn(2+) contacts are provided by His-142 and His-148. One can recognise an EGF-like domain in the interval 225–264 (NQYYGCWCSKQLECKNGGYTSPSDCSRCNCPKGFFGNLCD). Asn-310 carries an N-linked (GlcNAc...) asparagine glycan.

Requires Zn(2+) as cofactor.

The protein resides in the secreted. In terms of biological role, metalloprotease. The polypeptide is Zinc metalloproteinase nas-19 (nas-19) (Caenorhabditis elegans).